Reading from the N-terminus, the 88-residue chain is Small ribosomal subunit protein uS15 (88 aa).

It belongs to the universal ribosomal protein uS15 family. As to quaternary structure, part of the 30S ribosomal subunit. Forms a bridge to the 50S subunit in the 70S ribosome, contacting the 23S rRNA.

Its function is as follows. One of the primary rRNA binding proteins, it binds directly to 16S rRNA where it helps nucleate assembly of the platform of the 30S subunit by binding and bridging several RNA helices of the 16S rRNA. Functionally, forms an intersubunit bridge (bridge B4) with the 23S rRNA of the 50S subunit in the ribosome. The sequence is that of Small ribosomal subunit protein uS15 from Mycoplasmopsis agalactiae (strain NCTC 10123 / CIP 59.7 / PG2) (Mycoplasma agalactiae).